Consider the following 233-residue polypeptide: Phosphoglycolate phosphatase (233 aa).

Asp-13 serves as the catalytic Nucleophile. Positions 13, 15, and 175 each coordinate Mg(2+).

It belongs to the HAD-like hydrolase superfamily. CbbY/CbbZ/Gph/YieH family. Mg(2+) is required as a cofactor.

The catalysed reaction is 2-phosphoglycolate + H2O = glycolate + phosphate. Its pathway is organic acid metabolism; glycolate biosynthesis; glycolate from 2-phosphoglycolate: step 1/1. Specifically catalyzes the dephosphorylation of 2-phosphoglycolate. Is involved in the dissimilation of the intracellular 2-phosphoglycolate formed during the DNA repair of 3'-phosphoglycolate ends, a major class of DNA lesions induced by oxidative stress. The sequence is that of Phosphoglycolate phosphatase from Agrobacterium fabrum (strain C58 / ATCC 33970) (Agrobacterium tumefaciens (strain C58)).